The sequence spans 826 residues: DEAD-box ATP-dependent RNA helicase 13 (826 aa).

Over residues 1 to 10 (MVTGDKESSL) the composition is skewed to basic and acidic residues. 2 disordered regions span residues 1–62 (MVTG…QLDG) and 76–175 (HLTL…GDDT). The segment covering 11 to 22 (MKKRNKRSHKRK) has biased composition (basic residues). Polar residues predominate over residues 49 to 58 (SFSTLFSGSG). Over residues 94-128 (EDDDDTNETVDEMIEGEEAEEDGEGRDDEDDEDDE) the composition is skewed to acidic residues. Residues 125–166 (EDDEETRKKKEKKAKRNKEKKKEKKKKKQKKINEAAKNQDAS) adopt a coiled-coil conformation. The span at 133–154 (KKEKKAKRNKEKKKEKKKKKQK) shows a compositional bias: basic residues. The Q motif motif lies at 190–218 (SAWSSMRLHPLLMKSIYRLDFKEPTKIQK). A Helicase ATP-binding domain is found at 222-439 (NVAAYQGKDV…KLKRGSSKSK (218 aa)). 235-242 (AETGSGKT) serves as a coordination point for ATP. Residues 363 to 366 (DEAD) carry the DEAD box motif. A Helicase C-terminal domain is found at 476–644 (KIEESFIKCE…YMPAVRKRLY (169 aa)). 2 coiled-coil regions span residues 666-712 (LKKH…TLLS) and 783-810 (KMKG…IGRR). Residues 783 to 826 (KMKGQSAEKRRDIASLKKKRKEEKIGRRDQRRNQKKQRKLMASS) form a disordered region. 2 stretches are compositionally biased toward basic and acidic residues: residues 788 to 797 (SAEKRRDIAS) and 804 to 814 (EEKIGRRDQRR). The span at 815–826 (NQKKQRKLMASS) shows a compositional bias: basic residues.

This sequence belongs to the DEAD box helicase family. DDX24/MAK5 subfamily.

It carries out the reaction ATP + H2O = ADP + phosphate + H(+). This is DEAD-box ATP-dependent RNA helicase 13 (RH13) from Arabidopsis thaliana (Mouse-ear cress).